We begin with the raw amino-acid sequence, 97 residues long: Apolipoprotein C-II (97 aa).

Residues 1-22 form the signal peptide; the sequence is MGSRFFLALFLALLVLGNEVQG. A lipid binding region spans residues 63–71; sequence SVDEKLRDM. A lipoprotein lipase cofactor region spans residues 75 to 97; the sequence is SSAAMTTYAGIFTDQLLTLLKGE.

It belongs to the apolipoprotein C2 family. Proapolipoprotein C-II is synthesized as a sialic acid containing glycoprotein which is subsequently desialylated prior to its proteolytic processing. In terms of processing, proapolipoprotein C-II, the major form found in plasma undergoes proteolytic cleavage of its N-terminal hexapeptide to generate the mature form apolipoprotein C-II, which occurs as the minor form in plasma.

It is found in the secreted. Functionally, component of chylomicrons, very low-density lipoproteins (VLDL), low-density lipoproteins (LDL), and high-density lipoproteins (HDL) in plasma. Plays an important role in lipoprotein metabolism as an activator of lipoprotein lipase. The protein is Apolipoprotein C-II (Apoc2) of Rattus norvegicus (Rat).